The following is a 442-amino-acid chain: Endothelin receptor type B (442 aa).

A signal peptide spans 1 to 26; the sequence is MQPPPSLCGRALVALVLACGLSRIWG. At 27–101 the chain is on the extracellular side; it reads EERGFPPDRA…GPIEIKETFK (75 aa). Asn59 carries an N-linked (GlcNAc...) asparagine glycan. The tract at residues 69–88 is disordered; the sequence is AEVPKGDRTAGSPPRTISPP. Residues 102 to 126 traverse the membrane as a helical segment; sequence YINTVVSCLVFVLGIIGNSTLLRII. Topologically, residues 127–137 are cytoplasmic; it reads YKNKCMRNGPN. A helical transmembrane segment spans residues 138–163; sequence ILIASLALGDLLHIVIDIPINVYKLL. Topologically, residues 164–175 are extracellular; the sequence is AEDWPFGAEMCK. Cysteines 174 and 255 form a disulfide. The chain crosses the membrane as a helical span at residues 176–197; the sequence is LVPFIQKASVGITVLSLCALSI. At 198–218 the chain is on the cytoplasmic side; the sequence is DRYRAVASWSRIKGIGVPKWT. The chain crosses the membrane as a helical span at residues 219-243; sequence AVEIVLIWVVSVVLAVPEAIGFDII. The Extracellular portion of the chain corresponds to 244–271; it reads TMDYKGSYLRICLLHPVQKTAFMQFYKT. The chain crosses the membrane as a helical span at residues 272–296; sequence AKDWWLFSFYFCLPLAITAFFYTLM. Over 297–324 the chain is Cytoplasmic; the sequence is TCEMLRKKSGMQIALNDHLKQRREVAKT. Ser305 bears the Phosphoserine mark. Residues 325–350 traverse the membrane as a helical segment; it reads VFCLVLVFALCWLPLHLSRILKLTLY. At 351 to 362 the chain is on the extracellular side; sequence NQNDPNRCELLS. Residues 363-389 form a helical membrane-spanning segment; sequence FLLVLDYIGINMASLNSCINPIALYLV. The Cytoplasmic portion of the chain corresponds to 390-442; that stretch reads SKRFKNCFKSCLCCWCQSFEEKQSLEEKQSCLKFKANDHGYDNFRSSNKYSSS. S-palmitoyl cysteine attachment occurs at residues Cys402, Cys403, and Cys405. The residue at position 419 (Ser419) is a Phosphoserine. Residue Tyr439 is modified to Phosphotyrosine. 3 positions are modified to phosphoserine: Ser440, Ser441, and Ser442.

It belongs to the G-protein coupled receptor 1 family. Endothelin receptor subfamily. EDNRB sub-subfamily. In terms of processing, palmitoylation of Cys-402 was confirmed by the palmitoylation of Cys-402 in a deletion mutant lacking both Cys-403 and Cys-405. In terms of tissue distribution, expressed in placental stem villi vessels, but not in cultured placental villi smooth muscle cells.

It localises to the cell membrane. Its function is as follows. Non-specific receptor for endothelin 1, 2, and 3. Mediates its action by association with G proteins that activate a phosphatidylinositol-calcium second messenger system. The polypeptide is Endothelin receptor type B (Homo sapiens (Human)).